A 508-amino-acid chain; its full sequence is MKDGEETPSVDGSTSASNREKLGTDLEIGPVDLSDGGKEEKVKDPNLVDWDGPDDPENPLNWTSKRKITATCSIALITFLTPLGSSMFAPGVGQLVKDFNVTSTELSSFVVSVYLLGYCFGPLIIAPLSELYGRQYVYHVCNILYVIWTIACAFAPEIGSLVVFRFFAGLAGSCPLTIGAGSIADMFVQEQRGGAMAAWALGPLIGPVVGPVAGAYLAQAKGWRWSFYVLAMAAGAITISSLFSIRESYAPTLLARKTKKLQKETGNMNLRSALDTGRTPKELFLYSIVRPTKMLFRSPIVFLLSLYVGVIYGYLYLLFTTITSVFQQQYNFSQGAVGLTYLGLGVGSLIGLFLIGATSDRLLNYLAAKNGEKKPEYRLPPMVPGAIFVPISLFMYGWTAYYQTHWIVPIIGTSFLGTGMMITFMCVSTYLVDAFTNYAASVMAANTVFRSLAGALLPLAGPKMYAVLGLGWGNSLLGFIALAFCALPVIFWIYGERIRTSPKFQVTF.

A disordered region spans residues 1–60; that stretch reads MKDGEETPSVDGSTSASNREKLGTDLEIGPVDLSDGGKEEKVKDPNLVDWDGPDDPENPL. A compositionally biased stretch (basic and acidic residues) spans 35-46; it reads DGGKEEKVKDPN. The N-linked (GlcNAc...) asparagine glycan is linked to Asn-61. Residues 73 to 93 form a helical membrane-spanning segment; that stretch reads SIALITFLTPLGSSMFAPGVG. Asn-100 is a glycosylation site (N-linked (GlcNAc...) asparagine). The next 6 helical transmembrane spans lie at 108–128, 143–163, 166–186, 197–217, 225–245, and 299–319; these read SFVVSVYLLGYCFGPLIIAPL, ILYVIWTIACAFAPEIGSLVV, FFAGLAGSCPLTIGAGSIADM, AAWALGPLIGPVVGPVAGAYL, WSFYVLAMAAGAITISSLFSI, and PIVFLLSLYVGVIYGYLYLLF. Positions 293-307 match the Peroxisomal targeting signal motif; that stretch reads KMLFRSPIVFLLSLY. Asn-331 carries N-linked (GlcNAc...) asparagine glycosylation. 5 helical membrane-spanning segments follow: residues 335-355, 379-399, 407-427, 435-457, and 475-495; these read GAVGLTYLGLGVGSLIGLFLI, LPPMVPGAIFVPISLFMYGWT, IVPIIGTSFLGTGMMITFMCV, FTNYAASVMAANTVFRSLAGALL, and SLLGFIALAFCALPVIFWIYG.

The protein belongs to the major facilitator superfamily.

It is found in the peroxisome membrane. Its function is as follows. MFS-type transporter involved in penicillin production, most likely through the translocation of isopenicillin N from the cytosol to the peroxisomal lumen across the peroxisomal membrane. The protein is MFS-type transporter penM of Penicillium rubens (strain ATCC 28089 / DSM 1075 / NRRL 1951 / Wisconsin 54-1255) (Penicillium chrysogenum).